The chain runs to 176 residues: Probable fimbrial subunit LpfE (176 aa).

The N-terminal stretch at 1 to 23 is a signal peptide; it reads MKFKRLLHSGIASLSLVACGVNA.

Belongs to the fimbrial protein family.

It is found in the fimbrium. In terms of biological role, part of the lpfABCC'DE fimbrial operon. LP fimbriae may participate in the interaction with eukaryotic cells by assisting in microcolony formation. This is Probable fimbrial subunit LpfE (lpfE) from Escherichia coli O157:H7.